The chain runs to 557 residues: Polypyrimidine tract-binding protein 1 (557 aa).

Residue M1 is modified to N-acetylmethionine. At S16 the chain carries Phosphoserine. RRM domains are found at residues 59–143 (RVIH…SSPN), 184–260 (LRII…FSKL), and 363–437 (SVLL…LSKH). A Glycyl lysine isopeptide (Lys-Gly) (interchain with G-Cter in SUMO2) cross-link involves residue K65. Y127 bears the Phosphotyrosine mark. T138 bears the Phosphothreonine mark. Position 141 is a phosphoserine (S141). K218 participates in a covalent cross-link: Glycyl lysine isopeptide (Lys-Gly) (interchain with G-Cter in SUMO2). The segment at 437–460 (HQSVQLPREGQEDQGLTKDYGNSP) is disordered. A Phosphoserine modification is found at S459. An RRM 4 domain is found at 480–555 (ATLHLSNIPP…HHLRVSFSKS (76 aa)).

In terms of assembly, monomer. Part of a ternary complex containing KHSRP, PTBP1, PTBP2 and HNRPH1. Interacts with RAVER1 and SFPQ.

The protein resides in the nucleus. Functionally, plays a role in pre-mRNA splicing and in the regulation of alternative splicing events. Activates exon skipping of its own pre-mRNA during muscle cell differentiation. Binds to the polypyrimidine tract of introns. May promote RNA looping when bound to two separate polypyrimidine tracts in the same pre-mRNA. May promote the binding of U2 snRNP to pre-mRNA. Cooperates with RAVER1 to modulate switching between mutually exclusive exons during maturation of the TPM1 pre-mRNA. Represses the splicing of MAPT/Tau exon 10. Binds to polypyrimidine-rich controlling element (PCE) of CFTR and promotes exon skipping of CFTR exon 9, thereby antagonizing TIA1 and its role in exon inclusion of CFTR exon 9. Plays a role in the splicing of pyruvate kinase PKM by binding repressively to a polypyrimidine tract flanking PKM exon 9, inhibiting exon 9 inclusion and resulting in exon 10 inclusion and production of the PKM M2 isoform. The protein is Polypyrimidine tract-binding protein 1 (PTBP1) of Bos taurus (Bovine).